The following is a 226-amino-acid chain: AA9 family lytic polysaccharide monooxygenase E (226 aa).

The signal sequence occupies residues 1-18 (MLANGAIVFLAAALGVSG). H19 is a binding site for Cu(2+). 2 disulfide bridges follow: C56–C174 and C144–C226. N-linked (GlcNAc...) asparagine glycosylation is present at N69. A Cu(2+)-binding site is contributed by H86. O2 contacts are provided by H160 and Q169. Position 171 (Y171) interacts with Cu(2+).

This sequence belongs to the polysaccharide monooxygenase AA9 family. Cu(2+) is required as a cofactor.

The protein localises to the secreted. It carries out the reaction [(1-&gt;4)-beta-D-glucosyl]n+m + reduced acceptor + O2 = 4-dehydro-beta-D-glucosyl-[(1-&gt;4)-beta-D-glucosyl]n-1 + [(1-&gt;4)-beta-D-glucosyl]m + acceptor + H2O.. Functionally, lytic polysaccharide monooxygenase (LPMO) that depolymerizes crystalline and amorphous polysaccharides via the oxidation of scissile alpha- or beta-(1-4)-glycosidic bonds, yielding C1 and C4 oxidation products. Catalysis by LPMOs requires the reduction of the active-site copper from Cu(II) to Cu(I) by a reducing agent and H(2)O(2) or O(2) as a cosubstrate. Shows endoglucanase activity on tamarind xyloglucan, as well as on beechwood xylan when combined with phosphoric acid swollen cellulose (PASC). Shows no activity on wheat arabinoxylan, konjac glucomannan, acetylated spruce galactoglucomannan, or cellopentaose. The sequence is that of AA9 family lytic polysaccharide monooxygenase E from Thermothielavioides terrestris (strain ATCC 38088 / NRRL 8126) (Thielavia terrestris).